The following is a 218-amino-acid chain: Heart- and neural crest derivatives-expressed protein 1 (218 aa).

3 disordered regions span residues 1–23, 56–112, and 172–203; these read MNLVGSYAHHHHHHHHHHPHPAH, APDF…RTES, and ADGGRESKRKRELQQHEGFPPALGPGEKRIKG. Over residues 8-21 the composition is skewed to basic residues; it reads AHHHHHHHHHHPHP. The segment covering 68–92 has biased composition (low complexity); sequence AAAAAASYGPDARPGQSPGRLEALG. A compositionally biased stretch (basic residues) spans 95–107; it reads LGRRKGSGPKKER. The bHLH domain occupies 97 to 149; the sequence is RRKGSGPKKERRRTESINSAFAELRECIPNVPADTKLSKIKTLRLATSYIAYL. T110 is modified (phosphothreonine; by PLK4). S112 carries the post-translational modification Phosphoserine; by PLK4.

As to quaternary structure, efficient DNA binding requires dimerization with another bHLH protein. Forms homodimers and heterodimers with TCF3 gene products E12 and E47, HAND2 and HEY1, HEY2 and HEYL (hairy-related transcription factors). Interacts with MDFIC. Interacts with SOX15; the interaction enhances HAND1-induced differentiation of trophoblast giant cells. Phosphorylation by PLK4 disrupts the interaction with MDFIC and leads to translocation into the nucleoplasm, allowing dimerization and transcription factor activity.

Its subcellular location is the nucleus. The protein resides in the nucleoplasm. It is found in the nucleolus. Transcription factor that plays an essential role in both trophoblast giant cell differentiation and in cardiac morphogenesis. Binds the DNA sequence 5'-NRTCTG-3' (non-canonical E-box). Acts as a transcriptional repressor of SOX15. In the adult, could be required for ongoing expression of cardiac-specific genes. This Bos taurus (Bovine) protein is Heart- and neural crest derivatives-expressed protein 1 (HAND1).